Reading from the N-terminus, the 275-residue chain is Tumor necrosis factor-inducible gene 6 protein (275 aa).

The signal sequence occupies residues 1–17; sequence MVVLLCLCVLLWEEAHG. The 94-residue stretch at 36 to 129 folds into the Link domain; it reads GVYHREARAG…SERWDAYCYN (94 aa). Disulfide bonds link Cys58-Cys127, Cys82-Cys103, and Cys135-Cys161. N-linked (GlcNAc...) asparagine glycosylation is present at Asn118. A CUB domain is found at 135-247; sequence CGGVFTDPKR…GGFQIKYVTV (113 aa). Ca(2+) contacts are provided by Glu183, Asp191, Asp232, Ser234, and Val235. Residues Cys188 and Cys210 are joined by a disulfide bond. Polar residues predominate over residues 253-264; the sequence is SSQAKNTSTTGN. Positions 253–275 are disordered; it reads SSQAKNTSTTGNKKFLPGRFSHL. The N-linked (GlcNAc...) asparagine glycan is linked to Asn258.

In terms of assembly, interacts (via Link domain) with inter-alpha-inhibitor (I-alpha-I) component bikunin. Interacts with ITIH2/HC2; this interaction is required for transesterification of the HC to hyaluronan. Interacts (via Link and CUB domains) with ITIH1. Chondroitin sulfate may be required for the stability of the complex. Interacts (via Link domain) with various C-X-C and C-C chemokines including PF4, CXCL8, CXCL11, CXCL12, CCL2, CCL7, CCL19, CCL21, and CCL27; this interaction interferes with chemokine binding to glycosaminoglycans. Interacts (primarily via Link domain) with BMP2; this interaction is inhibited by hyaluronan. Interacts (via both Link and CUB domains) with TNFSF11. Interacts (via CUB domain) with FN1 (via type III repeats 9-14); this interaction enhances fibronectin fibril assembly. TNFAIP6 may act as a bridging molecule between FN1 and THBS1. In terms of tissue distribution, expressed in epiphyseal and metaphyseal bone marrow of both the femur and tibia (at protein level).

The protein resides in the secreted. Its function is as follows. Major regulator of extracellular matrix organization during tissue remodeling. Catalyzes the transfer of a heavy chain (HC) from inter-alpha-inhibitor (I-alpha-I) complex to hyaluronan. Cleaves the ester bond between the C-terminus of the HC and GalNAc residue of the chondroitin sulfate chain in I-alpha-I complex followed by transesterification of the HC to hyaluronan. In the process, potentiates the antiprotease function of I-alpha-I complex through release of free bikunin. Acts as a catalyst in the formation of hyaluronan-HC oligomers and hyaluronan-rich matrix surrounding the cumulus cell-oocyte complex, a necessary step for oocyte fertilization. Assembles hyaluronan in pericellular matrices that serve as platforms for receptor clustering and signaling. Enables binding of hyaluronan deposited on the surface of macrophages to LYVE1 on lymphatic endothelium and facilitates macrophage extravasation. Alters hyaluronan binding to functionally latent CD44 on vascular endothelium, switching CD44 into an active state that supports leukocyte rolling. Modulates the interaction of chemokines with extracellular matrix components and proteoglycans on endothelial cell surface, likely preventing chemokine gradient formation. In a negative feedback mechanism, may limit excessive neutrophil recruitment at inflammatory sites by antagonizing the association of CXCL8 with glycosaminoglycans on vascular endothelium. Has a role in osteogenesis and bone remodeling. Inhibits BMP2-dependent differentiation of mesenchymal stem cell to osteoblasts. Protects against bone erosion during inflammation by inhibiting TNFSF11/RANKL-dependent osteoclast activation. The protein is Tumor necrosis factor-inducible gene 6 protein (Tnfaip6) of Mus musculus (Mouse).